We begin with the raw amino-acid sequence, 553 residues long: Arginine--tRNA ligase (553 aa).

Residues 123 to 133 (ANPTGPLTIGR) carry the 'HIGH' region motif.

This sequence belongs to the class-I aminoacyl-tRNA synthetase family. Monomer.

It localises to the cytoplasm. The catalysed reaction is tRNA(Arg) + L-arginine + ATP = L-arginyl-tRNA(Arg) + AMP + diphosphate. The sequence is that of Arginine--tRNA ligase from Chlorobium phaeobacteroides (strain BS1).